A 512-amino-acid chain; its full sequence is Lysine--tRNA ligase (512 aa).

Glutamate 408 and glutamate 415 together coordinate Mg(2+).

Belongs to the class-II aminoacyl-tRNA synthetase family. As to quaternary structure, homodimer. Requires Mg(2+) as cofactor.

It localises to the cytoplasm. It carries out the reaction tRNA(Lys) + L-lysine + ATP = L-lysyl-tRNA(Lys) + AMP + diphosphate. This Prochlorococcus marinus (strain MIT 9515) protein is Lysine--tRNA ligase.